A 128-amino-acid polypeptide reads, in one-letter code: Fluoride-specific ion channel FluC (128 aa).

The next 4 membrane-spanning stretches (helical) occupy residues 5–25, 34–54, 67–87, and 99–119; these read LFISCGAILGASLRWAIGLLF, FGTLIANLFGCLIIGVLLGLF, FLITGFLGSLTTFSSFSSEVV, and FCVLMMHLFGCLAMTVLGIWI. Gly-74 and Thr-77 together coordinate Na(+).

This sequence belongs to the fluoride channel Fluc/FEX (TC 1.A.43) family.

Its subcellular location is the cell inner membrane. It carries out the reaction fluoride(in) = fluoride(out). Its activity is regulated as follows. Na(+) is not transported, but it plays an essential structural role and its presence is essential for fluoride channel function. Fluoride-specific ion channel. Important for reducing fluoride concentration in the cell, thus reducing its toxicity. This Haemophilus influenzae (strain PittGG) protein is Fluoride-specific ion channel FluC.